The following is a 780-amino-acid chain: Ribosome biogenesis protein BOP1 homolog (780 aa).

The segment covering 1–11 (MTKKQAIKRKV) has biased composition (basic residues). A disordered region spans residues 1 to 155 (MTKKQAIKRK…DSDTSDEEDI (155 aa)). The span at 17 to 26 (TNEQSSASEP) shows a compositional bias: polar residues. Composition is skewed to acidic residues over residues 44 to 53 (EDTTDDEGID), 60 to 72 (SSED…DEEG), 83 to 113 (AEGD…DAEE), and 145 to 154 (EDSDTSDEED). WD repeat units follow at residues 441–482 (GHTD…RTIE), 484–522 (NDVV…KLLI), 566–608 (THFK…SQIP), 611–649 (KSKG…LIKK), 652–691 (TNSK…KPYQ), 695–734 (LHRN…DLLQ), and 750–780 (RDEF…RLYT).

This sequence belongs to the WD repeat BOP1/ERB1 family.

The protein localises to the nucleus. Its subcellular location is the nucleolus. It localises to the nucleoplasm. Required for maturation of ribosomal RNAs and formation of the large ribosomal subunit. The protein is Ribosome biogenesis protein BOP1 homolog of Drosophila virilis (Fruit fly).